Consider the following 156-residue polypeptide: Small ribosomal subunit protein uS7 (156 aa).

Belongs to the universal ribosomal protein uS7 family. Part of the 30S ribosomal subunit. Contacts proteins S9 and S11.

One of the primary rRNA binding proteins, it binds directly to 16S rRNA where it nucleates assembly of the head domain of the 30S subunit. Is located at the subunit interface close to the decoding center, probably blocks exit of the E-site tRNA. The protein is Small ribosomal subunit protein uS7 of Bacillus velezensis (strain DSM 23117 / BGSC 10A6 / LMG 26770 / FZB42) (Bacillus amyloliquefaciens subsp. plantarum).